Reading from the N-terminus, the 121-residue chain is Large ribosomal subunit protein bL21c (121 aa).

The protein belongs to the bacterial ribosomal protein bL21 family. As to quaternary structure, part of the 50S ribosomal subunit.

It localises to the plastid. It is found in the chloroplast. Functionally, this protein binds to 23S rRNA. The sequence is that of Large ribosomal subunit protein bL21c from Huperzia lucidula (Shining clubmoss).